The sequence spans 336 residues: 4-hydroxy-3-methylbut-2-enyl diphosphate reductase (336 aa).

The interval methionine 1–threonine 23 is disordered. [4Fe-4S] cluster is bound at residue cysteine 36. Histidine 65 and histidine 98 together coordinate (2E)-4-hydroxy-3-methylbut-2-enyl diphosphate. Residues histidine 65 and histidine 98 each coordinate dimethylallyl diphosphate. Histidine 65 and histidine 98 together coordinate isopentenyl diphosphate. Residue cysteine 120 coordinates [4Fe-4S] cluster. Histidine 148 serves as a coordination point for (2E)-4-hydroxy-3-methylbut-2-enyl diphosphate. Histidine 148 contacts dimethylallyl diphosphate. Histidine 148 provides a ligand contact to isopentenyl diphosphate. Glutamate 150 functions as the Proton donor in the catalytic mechanism. Threonine 190 provides a ligand contact to (2E)-4-hydroxy-3-methylbut-2-enyl diphosphate. Cysteine 220 lines the [4Fe-4S] cluster pocket. The (2E)-4-hydroxy-3-methylbut-2-enyl diphosphate site is built by serine 248, serine 249, asparagine 250, and serine 293. Dimethylallyl diphosphate contacts are provided by serine 248, serine 249, asparagine 250, and serine 293. 4 residues coordinate isopentenyl diphosphate: serine 248, serine 249, asparagine 250, and serine 293.

This sequence belongs to the IspH family. Requires [4Fe-4S] cluster as cofactor.

It carries out the reaction isopentenyl diphosphate + 2 oxidized [2Fe-2S]-[ferredoxin] + H2O = (2E)-4-hydroxy-3-methylbut-2-enyl diphosphate + 2 reduced [2Fe-2S]-[ferredoxin] + 2 H(+). It catalyses the reaction dimethylallyl diphosphate + 2 oxidized [2Fe-2S]-[ferredoxin] + H2O = (2E)-4-hydroxy-3-methylbut-2-enyl diphosphate + 2 reduced [2Fe-2S]-[ferredoxin] + 2 H(+). It participates in isoprenoid biosynthesis; dimethylallyl diphosphate biosynthesis; dimethylallyl diphosphate from (2E)-4-hydroxy-3-methylbutenyl diphosphate: step 1/1. It functions in the pathway isoprenoid biosynthesis; isopentenyl diphosphate biosynthesis via DXP pathway; isopentenyl diphosphate from 1-deoxy-D-xylulose 5-phosphate: step 6/6. In terms of biological role, catalyzes the conversion of 1-hydroxy-2-methyl-2-(E)-butenyl 4-diphosphate (HMBPP) into a mixture of isopentenyl diphosphate (IPP) and dimethylallyl diphosphate (DMAPP). Acts in the terminal step of the DOXP/MEP pathway for isoprenoid precursor biosynthesis. This chain is 4-hydroxy-3-methylbut-2-enyl diphosphate reductase, found in Corynebacterium efficiens (strain DSM 44549 / YS-314 / AJ 12310 / JCM 11189 / NBRC 100395).